A 314-amino-acid polypeptide reads, in one-letter code: Ferric-anguibactin transport system permease protein FatD (314 aa).

10 helical membrane passes run 1–21 (MTFR…FFGA), 49–69 (VALI…QHIV), 76–96 (PGTT…IVML), 103–123 (ERMF…IAII), 132–152 (ALVP…AEFY), 180–200 (IIFL…RFTV), 207–226 (IASN…LILV), 230–252 (VAVT…NLVA), 265–285 (IVAL…RVVL), and 288–308 (FEVP…LAFL).

Belongs to the binding-protein-dependent transport system permease family. FecCD subfamily. Part of an iron transport system composed of the outer membrane receptor FatA, the periplasmic binding protein FatB and the inner membrane proteins FatC and FatD.

It localises to the cell inner membrane. Functionally, involved in the uptake of iron in complex with the siderophore anguibactin. Responsible for the translocation of ferric-anguibactin across the cytoplasmic membrane. This chain is Ferric-anguibactin transport system permease protein FatD, found in Vibrio anguillarum (strain ATCC 68554 / 775) (Listonella anguillarum).